The chain runs to 112 residues: UPF0102 protein Spea_0251 (112 aa).

This sequence belongs to the UPF0102 family.

This is UPF0102 protein Spea_0251 from Shewanella pealeana (strain ATCC 700345 / ANG-SQ1).